We begin with the raw amino-acid sequence, 113 residues long: UPF0122 protein M6_Spy0905 (113 aa).

It belongs to the UPF0122 family.

Might take part in the signal recognition particle (SRP) pathway. This is inferred from the conservation of its genetic proximity to ftsY/ffh. May be a regulatory protein. This is UPF0122 protein M6_Spy0905 from Streptococcus pyogenes serotype M6 (strain ATCC BAA-946 / MGAS10394).